A 275-amino-acid chain; its full sequence is 2,3,4,5-tetrahydropyridine-2,6-dicarboxylate N-succinyltransferase (275 aa).

This sequence belongs to the transferase hexapeptide repeat family.

It localises to the cytoplasm. The enzyme catalyses (S)-2,3,4,5-tetrahydrodipicolinate + succinyl-CoA + H2O = (S)-2-succinylamino-6-oxoheptanedioate + CoA. It functions in the pathway amino-acid biosynthesis; L-lysine biosynthesis via DAP pathway; LL-2,6-diaminopimelate from (S)-tetrahydrodipicolinate (succinylase route): step 1/3. In Paraburkholderia phytofirmans (strain DSM 17436 / LMG 22146 / PsJN) (Burkholderia phytofirmans), this protein is 2,3,4,5-tetrahydropyridine-2,6-dicarboxylate N-succinyltransferase.